A 239-amino-acid polypeptide reads, in one-letter code: Outer membrane protein PagN (239 aa).

The first 22 residues, methionine 1 to alanine 22, serve as a signal peptide directing secretion. Topologically, residues lysine 23–isoleucine 26 are periplasmic. The chain crosses the membrane as a beta stranded span at residues tyrosine 27–valine 36. The Extracellular portion of the chain corresponds to valine 37–valine 65. Residues phenylalanine 66–phenylalanine 76 traverse the membrane as a beta stranded segment. The Periplasmic segment spans residues tyrosine 77–glutamine 81. A beta stranded transmembrane segment spans residues leucine 82 to phenylalanine 92. Residues arginine 93 to arginine 120 lie on the Extracellular side of the membrane. A beta stranded transmembrane segment spans residues methionine 121 to phenylalanine 132. The Periplasmic portion of the chain corresponds to histidine 133–alanine 137. Residues phenylalanine 138–leucine 148 form a beta stranded membrane-spanning segment. Topologically, residues alanine 149 to asparagine 174 are extracellular. A beta stranded membrane pass occupies residues phenylalanine 175–tyrosine 185. At alanine 186–asparagine 190 the chain is on the periplasmic side. A beta stranded membrane pass occupies residues isoleucine 191 to isoleucine 200. The Extracellular segment spans residues asparagine 201–aspartate 230. The beta stranded transmembrane segment at phenylalanine 231–phenylalanine 239 threads the bilayer.

It is found in the cell outer membrane. Functionally, haemagglutinin that facilitates the adhesion to and invasion of epithelial mammalian cells. Utilizes heparinated proteoglycan as a receptor to successfully invade host cells. This is Outer membrane protein PagN (pagN) from Salmonella typhimurium (strain LT2 / SGSC1412 / ATCC 700720).